The sequence spans 287 residues: CBK1 kinase activator protein MOB2 (287 aa).

The segment at 1–89 (MSFFNFKAFG…QQQEASERSE (89 aa)) is disordered. Tyr33 is modified (phosphotyrosine). Over residues 34–44 (SSPHSSNSRLS) the composition is skewed to low complexity. Residues 45–56 (LRNKHHSPKRHS) show a composition bias toward basic residues. Phosphoserine is present on Ser59. Positions 63-83 (QKSTPQSQQLTSTTPQSQQQE) are enriched in low complexity. At Thr76 the chain carries Phosphothreonine.

This sequence belongs to the MOB1/phocein family. Interacts with protein kinase CBK1 to form the RAM CBK1-MOB2 kinase complex.

It is found in the nucleus. Its subcellular location is the cytoplasm. Functionally, functions as an activator subunit for the CBK1 protein kinase. Part of the regulation of ACE2 activity and cellular morphogenesis (RAM) signaling network. Required for coordinating polarized cell growth during interphase with the onset of mitosis. Required for mother/daughter cell separation after cytokinesis. Also has a role in the prevention of nuclear export of ACE2 from the daughter cell nucleus after mitotic exit. It coordinates ACE2-dependent transcription with mitotic exit network activation. The sequence is that of CBK1 kinase activator protein MOB2 (MOB2) from Saccharomyces cerevisiae (strain ATCC 204508 / S288c) (Baker's yeast).